The sequence spans 37 residues: Large ribosomal subunit protein bL36 (37 aa).

It belongs to the bacterial ribosomal protein bL36 family.

The sequence is that of Large ribosomal subunit protein bL36 from Aliarcobacter butzleri (strain RM4018) (Arcobacter butzleri).